The sequence spans 308 residues: Ornithine carbamoyltransferase (308 aa).

Carbamoyl phosphate is bound by residues 56-59 (STRT), Q83, R107, and 134-137 (HPCQ). Residues N165, D225, and 229–230 (SM) contribute to the L-ornithine site. Carbamoyl phosphate contacts are provided by residues 266-267 (CL) and R294.

The protein belongs to the aspartate/ornithine carbamoyltransferase superfamily. OTCase family.

It is found in the cytoplasm. The enzyme catalyses carbamoyl phosphate + L-ornithine = L-citrulline + phosphate + H(+). The protein operates within amino-acid biosynthesis; L-arginine biosynthesis; L-arginine from L-ornithine and carbamoyl phosphate: step 1/3. In terms of biological role, reversibly catalyzes the transfer of the carbamoyl group from carbamoyl phosphate (CP) to the N(epsilon) atom of ornithine (ORN) to produce L-citrulline. The sequence is that of Ornithine carbamoyltransferase from Cereibacter sphaeroides (strain ATCC 17023 / DSM 158 / JCM 6121 / CCUG 31486 / LMG 2827 / NBRC 12203 / NCIMB 8253 / ATH 2.4.1.) (Rhodobacter sphaeroides).